The sequence spans 378 residues: Lipid-A-disaccharide synthase (378 aa).

Belongs to the LpxB family.

The enzyme catalyses a lipid X + a UDP-2-N,3-O-bis[(3R)-3-hydroxyacyl]-alpha-D-glucosamine = a lipid A disaccharide + UDP + H(+). Its pathway is bacterial outer membrane biogenesis; LPS lipid A biosynthesis. Functionally, condensation of UDP-2,3-diacylglucosamine and 2,3-diacylglucosamine-1-phosphate to form lipid A disaccharide, a precursor of lipid A, a phosphorylated glycolipid that anchors the lipopolysaccharide to the outer membrane of the cell. The polypeptide is Lipid-A-disaccharide synthase (Pseudomonas paraeruginosa (strain DSM 24068 / PA7) (Pseudomonas aeruginosa (strain PA7))).